The following is a 592-amino-acid chain: Transducer of Cdc42-dependent actin assembly protein 1 homolog (592 aa).

Residues 3–267 form the F-BAR domain; sequence DSCSWDQLWD…DIGLIDPSRD (265 aa). Disordered regions lie at residues 343 to 366 and 447 to 519; these read FGGGTADKKTDSGDYGTLPPQQRA and SATS…DELY. The REM-1 domain occupies 359-436; sequence TLPPQQRARK…IQKFKILLDD (78 aa). Positions 363 to 441 form a coiled coil; that stretch reads QQRARKIAGK…ILLDDVNAQL (79 aa). A compositionally biased stretch (polar residues) spans 447-457; sequence SATSVGGSDTP. Over residues 459–474 the composition is skewed to low complexity; that stretch reads SIRSVSSASSGVTSRV. Residues 495 to 510 show a composition bias toward polar residues; sequence FSGSNGGSDTDPTING. The region spanning 527 to 589 is the SH3 domain; the sequence is PVLGEAIAQF…PSSYLKVTWF (63 aa).

The protein belongs to the FNBP1 family. As to quaternary structure, interacts (via SH3 domain) with wsp-1. Interacts with cdc-42 and (via SH3 domain) with wve-1. In terms of tissue distribution, expressed in the germline and specifically in the gonads.

It is found in the cell junction. It localises to the apical cell membrane. The protein localises to the basolateral cell membrane. Its subcellular location is the cytoplasmic vesicle. The protein resides in the cytoplasm. It is found in the perinuclear region. It localises to the recycling endosome. In terms of biological role, plays a role in protein trafficking, actin organization and embryonic morphogenesis. Potentially acts as a cdc-42 effector. May play a role in hypodermal P-cell nuclear positioning. Together with toca-2, is required for protein trafficking regulating yolk protein clathrin-mediated endocytosis by oocytes during oogenesis and retrograde recycling and the sorting of recycling endosome cargo proteins such as mig-14. Also, together with toca-2, controls the distribution of actin at cell junctions. The sequence is that of Transducer of Cdc42-dependent actin assembly protein 1 homolog from Caenorhabditis elegans.